A 206-amino-acid chain; its full sequence is Thymidylate kinase (206 aa).

Gly-10–Thr-17 lines the ATP pocket.

The protein belongs to the thymidylate kinase family.

The enzyme catalyses dTMP + ATP = dTDP + ADP. Functionally, phosphorylation of dTMP to form dTDP in both de novo and salvage pathways of dTTP synthesis. The polypeptide is Thymidylate kinase (Bifidobacterium longum (strain DJO10A)).